The following is a 242-amino-acid chain: MNAEKPPVTHNVDHEEIAKFEAVASRWWDLEGEFKPLHRINPLRLGYIAERSGGLFGKKVLDVGCGGGILAESMAREGATVTGLDMGFEPLQVAKLHALESGIQVDYVQETVEEHAAKHAHQYDVVTCMEMLEHVPDPQSVVRACAQLVKPGGEVFFSTLNRNGKSWLMAVVGAEYILRMVPKGTHDVKKFIKPAELLNWVDQTVLKERHMTGLHYNPITNTFKLGPGVDVNYMVHTTAQVD.

The S-adenosyl-L-methionine site is built by arginine 44, glycine 64, aspartate 85, and methionine 129.

It belongs to the methyltransferase superfamily. UbiG/COQ3 family.

The catalysed reaction is a 3-demethylubiquinol + S-adenosyl-L-methionine = a ubiquinol + S-adenosyl-L-homocysteine + H(+). It carries out the reaction a 3-(all-trans-polyprenyl)benzene-1,2-diol + S-adenosyl-L-methionine = a 2-methoxy-6-(all-trans-polyprenyl)phenol + S-adenosyl-L-homocysteine + H(+). Its pathway is cofactor biosynthesis; ubiquinone biosynthesis. Functionally, O-methyltransferase that catalyzes the 2 O-methylation steps in the ubiquinone biosynthetic pathway. The chain is Ubiquinone biosynthesis O-methyltransferase from Citrobacter koseri (strain ATCC BAA-895 / CDC 4225-83 / SGSC4696).